The following is a 493-amino-acid chain: Transmembrane protein 145 (493 aa).

A helical membrane pass occupies residues 9–29 (LRRLLPPLLLLLLSLPPRARA). Asn-35 carries an N-linked (GlcNAc...) asparagine glycan. Helical transmembrane passes span 175–195 (VTFL…GYLL), 207–227 (MFMA…IYWG), 241–261 (ILAK…LILL), 282–302 (VYMT…AEFF), 318–338 (GLIG…LVSL), 349–369 (VPFF…ALIA), and 381–401 (IVNG…LIMT). Asn-444 carries N-linked (GlcNAc...) asparagine glycosylation. Positions 464–493 (PATSPLPRAAPDSGLPLFRDLRPPGPLRDL) are disordered.

It is found in the membrane. The polypeptide is Transmembrane protein 145 (TMEM145) (Homo sapiens (Human)).